The following is a 206-amino-acid chain: KH domain-containing protein 3 (206 aa).

The interval M1 to K40 is involved in RNA binding. Residues K40–I103 enclose the KH; atypical domain. Over residues G144–E153 the composition is skewed to basic and acidic residues. Positions G144 to L206 are disordered. At T145 the chain carries Phosphothreonine. The segment covering T166–S183 has biased composition (polar residues). Position 171 is a phosphoserine (S171).

The protein belongs to the KHDC1 family. In terms of assembly, component of the subcortical maternal complex (SCMC), at least composed of NLRP5, KHDC3L, OOEP, and TLE6. Within the complex, interacts with NLRP5, KHDC3L and TLE6. The SCMC may facilitate translocation of its components between the nuclear and cytoplasmic compartments. Forms a scaffold complex with OOEP/FLOPED, and interacts with BLM and TRIM25 at DNA replication forks. Interacts with PARP1; the interaction is increased following the formation of DNA double-strand breaks. Interacts with NUMA1.

It is found in the cytoplasm. The protein resides in the cell cortex. Its subcellular location is the nucleus. The protein localises to the mitochondrion. It localises to the cytoskeleton. It is found in the microtubule organizing center. The protein resides in the centrosome. Its subcellular location is the chromosome. Its function is as follows. Component of the subcortical maternal complex (SCMC), a multiprotein complex that plays a key role in early embryonic development. The SCMC complex is a structural constituent of cytoplasmic lattices, which consist in fibrous structures found in the cytoplasm of oocytes and preimplantation embryos. They are required to store maternal proteins critical for embryonic development, such as proteins that control epigenetic reprogramming of the preimplantation embryo, and prevent their degradation or activation. KHDC3 ensures proper spindle assembly by regulating the localization of AURKA via RHOA signaling and of PLK1 via a RHOA-independent process. Required for the localization of MAD2L1 to kinetochores to enable spindle assembly checkpoint function. As part of the OOEP-KHDC3 scaffold, recruits BLM and TRIM25 to DNA replication forks, thereby promoting the ubiquitination of BLM by TRIM25, enhancing BLM retainment at replication forks and therefore promoting stalled replication fork restart. Regulates homologous recombination-mediated DNA repair via recruitment of RAD51 to sites of DNA double-strand breaks, and sustainment of PARP1 activity, which in turn modulates downstream ATM or ATR activation. Activation of ATM or ATR in response to DNA double-strand breaks may be cell-type specific. Its role in DNA double-strand break repair is independent of its role in restarting stalled replication forks. Promotes neural stem cell neurogenesis and neuronal differentiation in the hippocampus. May regulate normal development of learning, memory and anxiety. Capable of binding RNA. The sequence is that of KH domain-containing protein 3 (KHDC3L) from Macaca mulatta (Rhesus macaque).